A 271-amino-acid chain; its full sequence is Formamidopyrimidine-DNA glycosylase (271 aa).

Pro-2 (schiff-base intermediate with DNA) is an active-site residue. Glu-3 serves as the catalytic Proton donor. The active-site Proton donor; for beta-elimination activity is the Lys-58. Residues His-92, Arg-111, and Arg-152 each coordinate DNA. An FPG-type zinc finger spans residues 237 to 271 (FVYGRQQQPCKQCGSLLRQTTIRQRTTVWCGHCQG). Catalysis depends on Arg-261, which acts as the Proton donor; for delta-elimination activity.

Belongs to the FPG family. As to quaternary structure, monomer. It depends on Zn(2+) as a cofactor.

The enzyme catalyses Hydrolysis of DNA containing ring-opened 7-methylguanine residues, releasing 2,6-diamino-4-hydroxy-5-(N-methyl)formamidopyrimidine.. The catalysed reaction is 2'-deoxyribonucleotide-(2'-deoxyribose 5'-phosphate)-2'-deoxyribonucleotide-DNA = a 3'-end 2'-deoxyribonucleotide-(2,3-dehydro-2,3-deoxyribose 5'-phosphate)-DNA + a 5'-end 5'-phospho-2'-deoxyribonucleoside-DNA + H(+). Its function is as follows. Involved in base excision repair of DNA damaged by oxidation or by mutagenic agents. Acts as a DNA glycosylase that recognizes and removes damaged bases. Has a preference for oxidized purines, such as 7,8-dihydro-8-oxoguanine (8-oxoG). Has AP (apurinic/apyrimidinic) lyase activity and introduces nicks in the DNA strand. Cleaves the DNA backbone by beta-delta elimination to generate a single-strand break at the site of the removed base with both 3'- and 5'-phosphates. This Xylella fastidiosa (strain 9a5c) protein is Formamidopyrimidine-DNA glycosylase (mutM1).